Here is a 160-residue protein sequence, read N- to C-terminus: ATP synthase subunit b (160 aa).

The helical transmembrane segment at 15–35 threads the bilayer; it reads LVIVIGLLFWFLRGFLGGILE.

It belongs to the ATPase B chain family. As to quaternary structure, F-type ATPases have 2 components, F(1) - the catalytic core - and F(0) - the membrane proton channel. F(1) has five subunits: alpha(3), beta(3), gamma(1), delta(1), epsilon(1). F(0) has four main subunits: a(1), b(1), b'(1) and c(10-14). The alpha and beta chains form an alternating ring which encloses part of the gamma chain. F(1) is attached to F(0) by a central stalk formed by the gamma and epsilon chains, while a peripheral stalk is formed by the delta, b and b' chains.

The protein localises to the cellular thylakoid membrane. Functionally, f(1)F(0) ATP synthase produces ATP from ADP in the presence of a proton or sodium gradient. F-type ATPases consist of two structural domains, F(1) containing the extramembraneous catalytic core and F(0) containing the membrane proton channel, linked together by a central stalk and a peripheral stalk. During catalysis, ATP synthesis in the catalytic domain of F(1) is coupled via a rotary mechanism of the central stalk subunits to proton translocation. Its function is as follows. Component of the F(0) channel, it forms part of the peripheral stalk, linking F(1) to F(0). This is ATP synthase subunit b from Synechococcus sp. (strain CC9605).